The chain runs to 412 residues: Serine hydroxymethyltransferase (412 aa).

(6S)-5,6,7,8-tetrahydrofolate contacts are provided by residues leucine 120 and 124 to 126 (GHL). Lysine 229 carries the N6-(pyridoxal phosphate)lysine modification. 352-354 (SPF) serves as a coordination point for (6S)-5,6,7,8-tetrahydrofolate.

It belongs to the SHMT family. In terms of assembly, homodimer. Pyridoxal 5'-phosphate is required as a cofactor.

The protein localises to the cytoplasm. It catalyses the reaction (6R)-5,10-methylene-5,6,7,8-tetrahydrofolate + glycine + H2O = (6S)-5,6,7,8-tetrahydrofolate + L-serine. It participates in one-carbon metabolism; tetrahydrofolate interconversion. It functions in the pathway amino-acid biosynthesis; glycine biosynthesis; glycine from L-serine: step 1/1. In terms of biological role, catalyzes the reversible interconversion of serine and glycine with tetrahydrofolate (THF) serving as the one-carbon carrier. This reaction serves as the major source of one-carbon groups required for the biosynthesis of purines, thymidylate, methionine, and other important biomolecules. Also exhibits THF-independent aldolase activity toward beta-hydroxyamino acids, producing glycine and aldehydes, via a retro-aldol mechanism. In Ruminiclostridium cellulolyticum (strain ATCC 35319 / DSM 5812 / JCM 6584 / H10) (Clostridium cellulolyticum), this protein is Serine hydroxymethyltransferase.